Consider the following 276-residue polypeptide: Digeranylgeranylglyceryl phosphate synthase (276 aa).

The next 5 helical transmembrane spans lie at 14-34 (VNTL…GGAV), 90-110 (VVLF…AVCI), 144-164 (FVFG…AALA), 200-220 (ALAV…VPYL), and 221-241 (VGVF…VMVV).

It belongs to the UbiA prenyltransferase family. DGGGP synthase subfamily. Mg(2+) is required as a cofactor.

Its subcellular location is the cell membrane. The catalysed reaction is sn-3-O-(geranylgeranyl)glycerol 1-phosphate + (2E,6E,10E)-geranylgeranyl diphosphate = 2,3-bis-O-(geranylgeranyl)-sn-glycerol 1-phosphate + diphosphate. It functions in the pathway membrane lipid metabolism; glycerophospholipid metabolism. Functionally, prenyltransferase that catalyzes the transfer of the geranylgeranyl moiety of geranylgeranyl diphosphate (GGPP) to the C2 hydroxyl of (S)-3-O-geranylgeranylglyceryl phosphate (GGGP). This reaction is the second ether-bond-formation step in the biosynthesis of archaeal membrane lipids. The chain is Digeranylgeranylglyceryl phosphate synthase from Halobacterium salinarum (strain ATCC 29341 / DSM 671 / R1).